The chain runs to 448 residues: Argininosuccinate synthase (448 aa).

ATP contacts are provided by residues A17–S25 and A43. Y99 is an L-citrulline binding site. ATP is bound by residues G129 and T131. Positions 131, 135, and 136 each coordinate L-aspartate. An L-citrulline-binding site is contributed by N135. D136 is an ATP binding site. Positions 139 and 192 each coordinate L-citrulline. D194 serves as a coordination point for ATP. 3 residues coordinate L-citrulline: T201, E203, and E280.

The protein belongs to the argininosuccinate synthase family. Type 2 subfamily. Homotetramer.

The protein localises to the cytoplasm. The catalysed reaction is L-citrulline + L-aspartate + ATP = 2-(N(omega)-L-arginino)succinate + AMP + diphosphate + H(+). It functions in the pathway amino-acid biosynthesis; L-arginine biosynthesis; L-arginine from L-ornithine and carbamoyl phosphate: step 2/3. The polypeptide is Argininosuccinate synthase (Pectobacterium atrosepticum (strain SCRI 1043 / ATCC BAA-672) (Erwinia carotovora subsp. atroseptica)).